The following is an 89-amino-acid chain: Small ribosomal subunit protein uS15 (89 aa).

The protein belongs to the universal ribosomal protein uS15 family. In terms of assembly, part of the 30S ribosomal subunit. Forms a bridge to the 50S subunit in the 70S ribosome, contacting the 23S rRNA.

Its function is as follows. One of the primary rRNA binding proteins, it binds directly to 16S rRNA where it helps nucleate assembly of the platform of the 30S subunit by binding and bridging several RNA helices of the 16S rRNA. Forms an intersubunit bridge (bridge B4) with the 23S rRNA of the 50S subunit in the ribosome. The protein is Small ribosomal subunit protein uS15 of Gluconacetobacter diazotrophicus (strain ATCC 49037 / DSM 5601 / CCUG 37298 / CIP 103539 / LMG 7603 / PAl5).